We begin with the raw amino-acid sequence, 190 residues long: Hypoxanthine/guanine phosphoribosyltransferase (190 aa).

The protein belongs to the purine/pyrimidine phosphoribosyltransferase family. Archaeal HPRT subfamily. As to quaternary structure, homodimer.

It localises to the cytoplasm. It carries out the reaction IMP + diphosphate = hypoxanthine + 5-phospho-alpha-D-ribose 1-diphosphate. The enzyme catalyses GMP + diphosphate = guanine + 5-phospho-alpha-D-ribose 1-diphosphate. It functions in the pathway purine metabolism; IMP biosynthesis via salvage pathway; IMP from hypoxanthine: step 1/1. In terms of biological role, catalyzes a salvage reaction resulting in the formation of IMP that is energically less costly than de novo synthesis. In Methanosalsum zhilinae (strain DSM 4017 / NBRC 107636 / OCM 62 / WeN5) (Methanohalophilus zhilinae), this protein is Hypoxanthine/guanine phosphoribosyltransferase.